A 214-amino-acid polypeptide reads, in one-letter code: ATP phosphoribosyltransferase (214 aa).

It belongs to the ATP phosphoribosyltransferase family. Short subfamily. Heteromultimer composed of HisG and HisZ subunits.

It is found in the cytoplasm. The enzyme catalyses 1-(5-phospho-beta-D-ribosyl)-ATP + diphosphate = 5-phospho-alpha-D-ribose 1-diphosphate + ATP. Its pathway is amino-acid biosynthesis; L-histidine biosynthesis; L-histidine from 5-phospho-alpha-D-ribose 1-diphosphate: step 1/9. Catalyzes the condensation of ATP and 5-phosphoribose 1-diphosphate to form N'-(5'-phosphoribosyl)-ATP (PR-ATP). Has a crucial role in the pathway because the rate of histidine biosynthesis seems to be controlled primarily by regulation of HisG enzymatic activity. This is ATP phosphoribosyltransferase from Azoarcus sp. (strain BH72).